Consider the following 639-residue polypeptide: Threonine--tRNA ligase (639 aa).

The TGS domain occupies 1–61; that stretch reads MINITLKDGK…KEDSELEILT (61 aa). Positions 242–532 are catalytic; sequence DHRKLGKELD…LIEHFAGAFP (291 aa). Zn(2+)-binding residues include Cys333, His384, and His509.

Belongs to the class-II aminoacyl-tRNA synthetase family. Homodimer. Zn(2+) is required as a cofactor.

The protein localises to the cytoplasm. It carries out the reaction tRNA(Thr) + L-threonine + ATP = L-threonyl-tRNA(Thr) + AMP + diphosphate + H(+). Functionally, catalyzes the attachment of threonine to tRNA(Thr) in a two-step reaction: L-threonine is first activated by ATP to form Thr-AMP and then transferred to the acceptor end of tRNA(Thr). Also edits incorrectly charged L-seryl-tRNA(Thr). The sequence is that of Threonine--tRNA ligase from Clostridium tetani (strain Massachusetts / E88).